A 132-amino-acid polypeptide reads, in one-letter code: Protein NrdI (132 aa).

Belongs to the NrdI family.

Its function is as follows. Probably involved in ribonucleotide reductase function. This is Protein NrdI from Bartonella quintana (strain Toulouse) (Rochalimaea quintana).